The following is a 400-amino-acid chain: Sensor histidine kinase LnrJ (400 aa).

Residues 1-2 (MK) lie on the Extracellular side of the membrane. Residues 3–23 (ALFFTRMFTLMVSCLMYLSIV) form a helical membrane-spanning segment. Residues 24–27 (KEDN) lie on the Cytoplasmic side of the membrane. A helical transmembrane segment spans residues 28–48 (WFGYVFIAAGAAMYAANHVLL). Over 49 to 61 (TKETNAIWFCLID) the chain is Extracellular. Residues 62–82 (IAIGFSFGFIFPGTGLFIIML) traverse the membrane as a helical segment. At 83–101 (CPVAVAFFLRGFPKRTAWS) the chain is on the cytoplasmic side. A helical transmembrane segment spans residues 102-122 (VLCLSSILFLTVLIRTYAMFG). The Extracellular segment spans residues 123–125 (NEF). Residues 126 to 146 (VIDHLTSMTFVVFCGVVGKLI) form a helical membrane-spanning segment. Residues 147–400 (RKLLDAQDTA…GPVQQKESLS (254 aa)) lie on the Cytoplasmic side of the membrane. Positions 190–385 (IYERNRMARE…TVNAEFSLAN (196 aa)) constitute a Histidine kinase domain. His201 carries the post-translational modification Phosphohistidine; by autocatalysis.

Autophosphorylated.

It is found in the cell membrane. The enzyme catalyses ATP + protein L-histidine = ADP + protein N-phospho-L-histidine.. Its function is as follows. Required for resistance to linearmycins, a family of antibiotic-specialized metabolites produced by some streptomycetes. Member of the two-component regulatory system LnrJ/LnrK, which induces expression of the LnrLMN ABC transporter in response to linearmycins and other polyenes. Acts as a specific sensor for linearmycin, either directly through binding or indirectly through membrane perturbation. Probably activates LnrK by phosphorylation. May also promote biofilm formation. The polypeptide is Sensor histidine kinase LnrJ (Bacillus subtilis (strain 168)).